The following is a 226-amino-acid chain: N-(5'-phosphoribosyl)anthranilate isomerase (226 aa).

It belongs to the TrpF family.

It carries out the reaction N-(5-phospho-beta-D-ribosyl)anthranilate = 1-(2-carboxyphenylamino)-1-deoxy-D-ribulose 5-phosphate. It functions in the pathway amino-acid biosynthesis; L-tryptophan biosynthesis; L-tryptophan from chorismate: step 3/5. This Methanocaldococcus jannaschii (strain ATCC 43067 / DSM 2661 / JAL-1 / JCM 10045 / NBRC 100440) (Methanococcus jannaschii) protein is N-(5'-phosphoribosyl)anthranilate isomerase (trpF).